We begin with the raw amino-acid sequence, 473 residues long: Glycine--tRNA ligase (473 aa).

Substrate contacts are provided by Arg101 and Glu172. Residues 204–206 (RNE), 214–219 (FRTREF), 289–290 (EL), and 333–336 (GVER) each bind ATP. Residue 219 to 223 (FEQME) coordinates substrate. 329–333 (EPSVG) provides a ligand contact to substrate.

Belongs to the class-II aminoacyl-tRNA synthetase family. As to quaternary structure, homodimer.

It is found in the cytoplasm. It catalyses the reaction tRNA(Gly) + glycine + ATP = glycyl-tRNA(Gly) + AMP + diphosphate. Its function is as follows. Catalyzes the attachment of glycine to tRNA(Gly). The protein is Glycine--tRNA ligase of Ureaplasma urealyticum serovar 10 (strain ATCC 33699 / Western).